The chain runs to 242 residues: Potassium/proton antiporter CemA (242 aa).

A run of 2 helical transmembrane segments spans residues 116–136 and 200–220; these read IIFC…YSIL and ISGF…YLIF.

This sequence belongs to the CemA family.

Its subcellular location is the plastid. The protein resides in the chloroplast inner membrane. The enzyme catalyses K(+)(in) + H(+)(out) = K(+)(out) + H(+)(in). Contributes to K(+)/H(+) antiport activity by supporting proton efflux to control proton extrusion and homeostasis in chloroplasts in a light-dependent manner to modulate photosynthesis. Prevents excessive induction of non-photochemical quenching (NPQ) under continuous-light conditions. Indirectly promotes efficient inorganic carbon uptake into chloroplasts. The protein is Potassium/proton antiporter CemA of Chloranthus spicatus (Chulantree).